The chain runs to 534 residues: Cytokine-like nuclear factor N-PAC (534 aa).

The 59-residue stretch at 8–66 folds into the PWWP domain; it reads QGDLVWGKLGRYPPWPGKIVNPPKDLKKPRGKKCLFVKFFGTEDHAWIKVEQLKPYHAH. Composition is skewed to basic and acidic residues over residues 93-122 and 138-157; these read AKAK…QTGE and RSRD…DKDS. The segment at 93–168 is disordered; sequence AKAKEHAKEH…SPQPSSLKKL (76 aa). Residues 144 to 156 constitute a DNA-binding region (a.T hook); that stretch reads PRKRGRPPKDDKD. An interaction with histone H3 region spans residues 190–193; sequence DSWL. A dehydrogenase domain region spans residues 242–534; it reads GNIIPTDKKI…MSAVYRAYIH (293 aa). NAD(+) is bound by residues 252–266, Thr-343, and Lys-486; that span reads GFLG…IVSN.

It belongs to the HIBADH-related family. NP60 subfamily. Homotetramere. Binds to mononucleosomes.

Its subcellular location is the nucleus. The protein localises to the chromosome. Its function is as follows. Cytokine-like nuclear factor with chromatin gene reader activity involved in chromatin modification and regulation of gene expression. Acts as a nucleosome-destabilizing factor that is recruited to genes during transcriptional activation. Recognizes and binds histone H3 without a preference for specific epigenetic markers and also binds DNA. Interacts with KDM1B and promotes its histone demethylase activity by facilitating the capture of H3 tails, they form a multifunctional enzyme complex that modifies transcribed chromatin and facilitates Pol II transcription through nucleosomes. In Xenopus tropicalis (Western clawed frog), this protein is Cytokine-like nuclear factor N-PAC (glyr1).